The sequence spans 105 residues: Translation initiation factor 1A (105 aa).

An S1-like domain is found at 18–92 (IRVKLPNKRI…DKCDIIYRYT (75 aa)).

This sequence belongs to the eIF-1A family.

Functionally, seems to be required for maximal rate of protein biosynthesis. Enhances ribosome dissociation into subunits and stabilizes the binding of the initiator Met-tRNA(I) to 40 S ribosomal subunits. The sequence is that of Translation initiation factor 1A (eIF1A) from Methanocorpusculum labreanum (strain ATCC 43576 / DSM 4855 / Z).